We begin with the raw amino-acid sequence, 142 residues long: Large ribosomal subunit protein bL17 (142 aa).

This sequence belongs to the bacterial ribosomal protein bL17 family. Part of the 50S ribosomal subunit. Contacts protein L32.

The sequence is that of Large ribosomal subunit protein bL17 from Chlamydia abortus (strain DSM 27085 / S26/3) (Chlamydophila abortus).